The following is a 101-amino-acid chain: MDKSKRTFLKSKRSFRRRLPPIQSGDRIDYKNMSLISRFISEQGKILSRRVNRLTLKQQRLITIAIKQARILSLLPFLNNEKQFERTESTTRTPSLRARKR.

The protein belongs to the bacterial ribosomal protein bS18 family. Part of the 30S ribosomal subunit.

It localises to the plastid. The protein resides in the chloroplast. This chain is Small ribosomal subunit protein bS18c, found in Lactuca sativa (Garden lettuce).